A 426-amino-acid polypeptide reads, in one-letter code: Enolase (426 aa).

A (2R)-2-phosphoglycerate-binding site is contributed by Gln-165. The Proton donor role is filled by Glu-207. Mg(2+) contacts are provided by Asp-244, Glu-285, and Asp-312. Residues Lys-337, Arg-366, Ser-367, and Lys-388 each contribute to the (2R)-2-phosphoglycerate site. Lys-337 (proton acceptor) is an active-site residue.

It belongs to the enolase family. The cofactor is Mg(2+).

The protein localises to the cytoplasm. It is found in the secreted. Its subcellular location is the cell surface. It carries out the reaction (2R)-2-phosphoglycerate = phosphoenolpyruvate + H2O. It functions in the pathway carbohydrate degradation; glycolysis; pyruvate from D-glyceraldehyde 3-phosphate: step 4/5. Its function is as follows. Catalyzes the reversible conversion of 2-phosphoglycerate (2-PG) into phosphoenolpyruvate (PEP). It is essential for the degradation of carbohydrates via glycolysis. This chain is Enolase, found in Thermosynechococcus vestitus (strain NIES-2133 / IAM M-273 / BP-1).